The primary structure comprises 599 residues: Proteasome-associated ATPase (599 aa).

The segment at 1–22 (MPHGHPGSQPDEGGELSNGSSS) is disordered. Positions 21–97 (SSGELTAQIR…LREEVDRLAQ (77 aa)) form a coiled coil. An ATP-binding site is contributed by 286-291 (GCGKTL). Residues 598-599 (YL) are docks into pockets in the proteasome alpha-ring.

Belongs to the AAA ATPase family. In terms of assembly, homohexamer. Assembles into a hexameric ring structure that caps the 20S proteasome core. Strongly interacts with the prokaryotic ubiquitin-like protein Pup through a hydrophobic interface; the interacting region of ARC lies in its N-terminal coiled-coil domain. There is one Pup binding site per ARC hexamer ring. Upon ATP-binding, the C-terminus of ARC interacts with the alpha-rings of the proteasome core, possibly by binding to the intersubunit pockets.

Its pathway is protein degradation; proteasomal Pup-dependent pathway. Functionally, ATPase which is responsible for recognizing, binding, unfolding and translocation of pupylated proteins into the bacterial 20S proteasome core particle. May be essential for opening the gate of the 20S proteasome via an interaction with its C-terminus, thereby allowing substrate entry and access to the site of proteolysis. Thus, the C-termini of the proteasomal ATPase may function like a 'key in a lock' to induce gate opening and therefore regulate proteolysis. The polypeptide is Proteasome-associated ATPase (Actinosynnema mirum (strain ATCC 29888 / DSM 43827 / JCM 3225 / NBRC 14064 / NCIMB 13271 / NRRL B-12336 / IMRU 3971 / 101)).